A 379-amino-acid polypeptide reads, in one-letter code: Lipoyl synthase, mitochondrial (379 aa).

[4Fe-4S] cluster is bound by residues C106, C111, C117, C137, C141, C144, and S352. The Radical SAM core domain occupies 122–341 (EHGTQTATIM…EERGNALGFL (220 aa)).

The protein belongs to the radical SAM superfamily. Lipoyl synthase family. The cofactor is [4Fe-4S] cluster.

The protein resides in the mitochondrion. It carries out the reaction [[Fe-S] cluster scaffold protein carrying a second [4Fe-4S](2+) cluster] + N(6)-octanoyl-L-lysyl-[protein] + 2 oxidized [2Fe-2S]-[ferredoxin] + 2 S-adenosyl-L-methionine + 4 H(+) = [[Fe-S] cluster scaffold protein] + N(6)-[(R)-dihydrolipoyl]-L-lysyl-[protein] + 4 Fe(3+) + 2 hydrogen sulfide + 2 5'-deoxyadenosine + 2 L-methionine + 2 reduced [2Fe-2S]-[ferredoxin]. The protein operates within protein modification; protein lipoylation via endogenous pathway; protein N(6)-(lipoyl)lysine from octanoyl-[acyl-carrier-protein]: step 2/2. Functionally, catalyzes the radical-mediated insertion of two sulfur atoms into the C-6 and C-8 positions of the octanoyl moiety bound to the lipoyl domains of lipoate-dependent enzymes, thereby converting the octanoylated domains into lipoylated derivatives. The chain is Lipoyl synthase, mitochondrial from Drosophila erecta (Fruit fly).